We begin with the raw amino-acid sequence, 175 residues long: PE-PGRS family protein PE_PGRS8 (175 aa).

The PE domain occupies 1–93 (MSFVIAAPEA…AGSYAAAEAA (93 aa)).

The protein belongs to the mycobacterial PE family. PGRS subfamily.

It is found in the secreted. The protein localises to the cell wall. Its subcellular location is the cell surface. In Mycobacterium tuberculosis (strain ATCC 25618 / H37Rv), this protein is PE-PGRS family protein PE_PGRS8.